The chain runs to 196 residues: Dephospho-CoA kinase (196 aa).

Positions 3-196 constitute a DPCK domain; the sequence is RIGLTGNIGC…KVYEELTRDP (194 aa). ATP is bound at residue 11–16; it reads GCGKST.

This sequence belongs to the CoaE family.

Its subcellular location is the cytoplasm. It carries out the reaction 3'-dephospho-CoA + ATP = ADP + CoA + H(+). It participates in cofactor biosynthesis; coenzyme A biosynthesis; CoA from (R)-pantothenate: step 5/5. In terms of biological role, catalyzes the phosphorylation of the 3'-hydroxyl group of dephosphocoenzyme A to form coenzyme A. This Aquifex aeolicus (strain VF5) protein is Dephospho-CoA kinase.